Here is a 503-residue protein sequence, read N- to C-terminus: Probable cytosol aminopeptidase (503 aa).

Mn(2+)-binding residues include lysine 270 and aspartate 275. Lysine 282 is a catalytic residue. Aspartate 293, aspartate 352, and glutamate 354 together coordinate Mn(2+). The active site involves arginine 356.

The protein belongs to the peptidase M17 family. Mn(2+) is required as a cofactor.

The protein resides in the cytoplasm. It catalyses the reaction Release of an N-terminal amino acid, Xaa-|-Yaa-, in which Xaa is preferably Leu, but may be other amino acids including Pro although not Arg or Lys, and Yaa may be Pro. Amino acid amides and methyl esters are also readily hydrolyzed, but rates on arylamides are exceedingly low.. The enzyme catalyses Release of an N-terminal amino acid, preferentially leucine, but not glutamic or aspartic acids.. Functionally, presumably involved in the processing and regular turnover of intracellular proteins. Catalyzes the removal of unsubstituted N-terminal amino acids from various peptides. This is Probable cytosol aminopeptidase from Salmonella typhi.